The following is a 358-amino-acid chain: UDP-N-acetylglucosamine--N-acetylmuramyl-(pentapeptide) pyrophosphoryl-undecaprenol N-acetylglucosamine transferase (358 aa).

Residues 13-15, Asn125, Arg161, Ser189, Ile244, and Gln288 contribute to the UDP-N-acetyl-alpha-D-glucosamine site; that span reads TGG.

The protein belongs to the glycosyltransferase 28 family. MurG subfamily.

The protein resides in the cell membrane. The catalysed reaction is di-trans,octa-cis-undecaprenyl diphospho-N-acetyl-alpha-D-muramoyl-L-alanyl-D-glutamyl-meso-2,6-diaminopimeloyl-D-alanyl-D-alanine + UDP-N-acetyl-alpha-D-glucosamine = di-trans,octa-cis-undecaprenyl diphospho-[N-acetyl-alpha-D-glucosaminyl-(1-&gt;4)]-N-acetyl-alpha-D-muramoyl-L-alanyl-D-glutamyl-meso-2,6-diaminopimeloyl-D-alanyl-D-alanine + UDP + H(+). The protein operates within cell wall biogenesis; peptidoglycan biosynthesis. Cell wall formation. Catalyzes the transfer of a GlcNAc subunit on undecaprenyl-pyrophosphoryl-MurNAc-pentapeptide (lipid intermediate I) to form undecaprenyl-pyrophosphoryl-MurNAc-(pentapeptide)GlcNAc (lipid intermediate II). The protein is UDP-N-acetylglucosamine--N-acetylmuramyl-(pentapeptide) pyrophosphoryl-undecaprenol N-acetylglucosamine transferase of Baumannia cicadellinicola subsp. Homalodisca coagulata.